Consider the following 457-residue polypeptide: COBRA-like protein 3 (457 aa).

A signal peptide spans 1–35 (MAVGGAGSSRSVAPCCCCAVLLAAALLFSAPATTE). N-linked (GlcNAc...) asparagine glycosylation is found at asparagine 45, asparagine 170, asparagine 178, asparagine 217, asparagine 242, asparagine 258, asparagine 326, asparagine 341, and asparagine 361. Asparagine 430 carries the GPI-anchor amidated asparagine lipid modification. A propeptide spans 431–457 (ASPLTKQPLTLSVLVFSIVLATLLAYA) (removed in mature form). Residues 437–457 (QPLTLSVLVFSIVLATLLAYA) traverse the membrane as a helical segment.

Belongs to the COBRA family.

Its subcellular location is the cell membrane. Functionally, involved in determining the orientation of cell expansion, probably by playing an important role in cellulose deposition. May act by recruiting cellulose synthesizing complexes to discrete positions on the cell surface. The protein is COBRA-like protein 3 (BC1L4) of Oryza sativa subsp. japonica (Rice).